Reading from the N-terminus, the 573-residue chain is NEDD4-binding protein 3-A (573 aa).

Disordered stretches follow at residues 168-216 (LNTM…INSL) and 382-407 (LRGE…EDSK). 2 stretches are compositionally biased toward polar residues: residues 184 to 196 (QPSN…QSES) and 207 to 216 (DSRQNSINSL). Residues 289–539 (VEDVARQLEE…KEIQSSYREM (251 aa)) are a coiled coil.

This sequence belongs to the N4BP3 family.

It is found in the cytoplasmic vesicle. The protein resides in the cell projection. The protein localises to the axon. Its subcellular location is the dendrite. Its function is as follows. Plays a role in axon and dendrite arborization during cranial nerve development. Also important for neural crest migration and early development of other anterior structures including eye, brain and cranial cartilage. The polypeptide is NEDD4-binding protein 3-A (Xenopus laevis (African clawed frog)).